The chain runs to 219 residues: Glutathione S-transferase F13 (219 aa).

One can recognise a GST N-terminal domain in the interval 2-82 (AMKLYGDEMS…YIAEKHRDKG (81 aa)). Residues 11–12 (SA), 40–41 (HK), 53–54 (KV), and 66–67 (ES) contribute to the glutathione site. Positions 90–217 (DPKEAAIVKL…VSPGLTVAPT (128 aa)) constitute a GST C-terminal domain.

This sequence belongs to the GST superfamily. Phi family.

It is found in the cytoplasm. Its subcellular location is the cytosol. The enzyme catalyses RX + glutathione = an S-substituted glutathione + a halide anion + H(+). Its function is as follows. May be involved in the conjugation of reduced glutathione to a wide number of exogenous and endogenous hydrophobic electrophiles and have a detoxification role against certain herbicides. The chain is Glutathione S-transferase F13 (GSTF13) from Arabidopsis thaliana (Mouse-ear cress).